The sequence spans 451 residues: Probable glycine dehydrogenase (decarboxylating) subunit 1 (451 aa).

This sequence belongs to the GcvP family. N-terminal subunit subfamily. In terms of assembly, the glycine cleavage system is composed of four proteins: P, T, L and H. In this organism, the P 'protein' is a heterodimer of two subunits.

It catalyses the reaction N(6)-[(R)-lipoyl]-L-lysyl-[glycine-cleavage complex H protein] + glycine + H(+) = N(6)-[(R)-S(8)-aminomethyldihydrolipoyl]-L-lysyl-[glycine-cleavage complex H protein] + CO2. Its function is as follows. The glycine cleavage system catalyzes the degradation of glycine. The P protein binds the alpha-amino group of glycine through its pyridoxal phosphate cofactor; CO(2) is released and the remaining methylamine moiety is then transferred to the lipoamide cofactor of the H protein. This is Probable glycine dehydrogenase (decarboxylating) subunit 1 from Thioalkalivibrio sulfidiphilus (strain HL-EbGR7).